The following is a 163-amino-acid chain: Putative pre-16S rRNA nuclease (163 aa).

This sequence belongs to the YqgF nuclease family.

The protein localises to the cytoplasm. Functionally, could be a nuclease involved in processing of the 5'-end of pre-16S rRNA. The polypeptide is Putative pre-16S rRNA nuclease (Roseobacter denitrificans (strain ATCC 33942 / OCh 114) (Erythrobacter sp. (strain OCh 114))).